A 572-amino-acid polypeptide reads, in one-letter code: Hexokinase (572 aa).

The Hexokinase domain maps to 49–492 (DEPPISLETV…SGKGAALITA (444 aa)). Positions 105–237 (NGTEEGRFIA…DIKVEVVALI (133 aa)) are hexokinase small subdomain. D-glucose 6-phosphate is bound by residues 116–120 (DLGGT) and Ser-185. ATP is bound at residue 116 to 121 (DLGGTN). Residues 185–186 (SY), 202–203 (TK), and 238–239 (ND) contribute to the substrate site. The segment at 238-481 (NDTVGTMVAA…LKFKLLQTAD (244 aa)) is hexokinase large subdomain. D-glucose 6-phosphate is bound by residues Asp-239 and Thr-263. Thr-263 contacts ATP. The substrate site is built by Asn-266, Glu-297, and Asp-331. ATP-binding positions include 336-337 (GK), 373-377 (TKYIS), and 448-452 (STYKY). Residues 446 to 448 (DGS) and Ser-483 contribute to the D-glucose 6-phosphate site.

The protein belongs to the hexokinase family.

It carries out the reaction a D-hexose + ATP = a D-hexose 6-phosphate + ADP + H(+). The enzyme catalyses D-mannose + ATP = D-mannose 6-phosphate + ADP + H(+). The catalysed reaction is D-fructose + ATP = D-fructose 6-phosphate + ADP + H(+). It catalyses the reaction D-glucose + ATP = D-glucose 6-phosphate + ADP + H(+). Its pathway is carbohydrate metabolism; hexose metabolism. The protein operates within carbohydrate degradation; glycolysis; D-glyceraldehyde 3-phosphate and glycerone phosphate from D-glucose: step 1/4. Its activity is regulated as follows. Activated by glucose-6-phosphate. Inhibited by N-acetylglucosamine, glucosamine, mannoheptulose and ADP. In terms of biological role, active against glucose, fructose, mannose, maltose and galactose. This is Hexokinase from Brugia malayi (Filarial nematode worm).